The following is a 301-amino-acid chain: MTSTSQFKQLERLGNGTYATVYKGLNKTTGLYVALKEVKLDSEEGTPSTAIREISLMKELKHENIVRLYDVIHTENKLTLVFEFMDNDLKKFMDSRLDREMPRGLELSLVKYFQWQLLQGVAFCHENRILHRDLKPQNLLINNKGQLKLGDFGLARAFGIPVNTFSSEVVTLWYRAPDVLMGSRTYCTSIDIWSCGCILAEMIMGKALFPGTNDDEQLKLIFETMGTPTEQTWVGVSQLPKYNPQIPLYPNKDIKQLLQATTKEQISDVLVNLIQGLLQLNPSMRLSAQQALSHPLFEEYH.

In terms of domain architecture, Protein kinase spans 7 to 297 (FKQLERLGNG…AQQALSHPLF (291 aa)). ATP-binding positions include 13-21 (LGNGTYATV) and K36. D133 functions as the Proton acceptor in the catalytic mechanism.

The protein belongs to the protein kinase superfamily. CMGC Ser/Thr protein kinase family. CDC2/CDKX subfamily. As to quaternary structure, interacts with a number of cyclins.

It carries out the reaction L-seryl-[protein] + ATP = O-phospho-L-seryl-[protein] + ADP + H(+). The catalysed reaction is L-threonyl-[protein] + ATP = O-phospho-L-threonyl-[protein] + ADP + H(+). When phosphate concentrations are high it phosphorylates the PHO4 transcription factor thus establishing repression. This is Negative regulator of the PHO system (PHO85) from Eremothecium gossypii (strain ATCC 10895 / CBS 109.51 / FGSC 9923 / NRRL Y-1056) (Yeast).